We begin with the raw amino-acid sequence, 272 residues long: Ethanolamine ammonia-lyase small subunit (272 aa).

3 residues coordinate adenosylcob(III)alamin: Val-161, Glu-182, and Cys-211.

The protein belongs to the EutC family. As to quaternary structure, the basic unit is a heterodimer which dimerizes to form tetramers. The heterotetramers trimerize; 6 large subunits form a core ring with 6 small subunits projecting outwards. Adenosylcob(III)alamin serves as cofactor.

Its subcellular location is the bacterial microcompartment. The catalysed reaction is ethanolamine = acetaldehyde + NH4(+). It participates in amine and polyamine degradation; ethanolamine degradation. Catalyzes the deamination of various vicinal amino-alcohols to oxo compounds. Allows this organism to utilize ethanolamine as the sole source of nitrogen and carbon in the presence of external vitamin B12. The polypeptide is Ethanolamine ammonia-lyase small subunit (Pseudomonas putida (strain GB-1)).